A 334-amino-acid chain; its full sequence is MSSWMASIPSPGPEWAQIHLPFLPFRIQTYALIILTGIVVAAMWTSRRLTKRGAEPGVVLDVLLWAVPLGIIGARLYHVVTHPADFFYPGANVWNPFQPGAIWNIWEGGNAIFGALIGGAVGVGIGCRWTGLRFWTFADALAPALLLAQAIGRLGNYVNQELFGLPTSLPWGLEIASGNKAIPVGLPEGTLFQPLFLYEIVWNVIGVFVILWLERRFRLQWGRVLAVYLIWYGLGRSYLESIRIDPSEFSFLGIPSNVWAAFAAVVLGAIILRVQAQRHTGLEPGPYLPGREWVSPQAEVESGETDPEEILHADDDEERTGTHKPQATSLSGSN.

Helical transmembrane passes span 22–42, 54–74, 105–125, and 131–151; these read FLPF…VVAA, AEPG…IIGA, IWEG…GVGI, and GLRF…AQAI. R153 lines the a 1,2-diacyl-sn-glycero-3-phospho-(1'-sn-glycerol) pocket. 2 helical membrane passes run 191 to 211 and 251 to 271; these read LFQP…FVIL and FLGI…GAII. The interval 296–334 is disordered; that stretch reads PQAEVESGETDPEEILHADDDEERTGTHKPQATSLSGSN. Residues 301–318 show a composition bias toward acidic residues; sequence ESGETDPEEILHADDDEE. The segment covering 323–334 has biased composition (polar residues); the sequence is HKPQATSLSGSN.

This sequence belongs to the Lgt family.

It localises to the cell membrane. It carries out the reaction L-cysteinyl-[prolipoprotein] + a 1,2-diacyl-sn-glycero-3-phospho-(1'-sn-glycerol) = an S-1,2-diacyl-sn-glyceryl-L-cysteinyl-[prolipoprotein] + sn-glycerol 1-phosphate + H(+). The protein operates within protein modification; lipoprotein biosynthesis (diacylglyceryl transfer). Catalyzes the transfer of the diacylglyceryl group from phosphatidylglycerol to the sulfhydryl group of the N-terminal cysteine of a prolipoprotein, the first step in the formation of mature lipoproteins. The protein is Phosphatidylglycerol--prolipoprotein diacylglyceryl transferase of Leifsonia xyli subsp. xyli (strain CTCB07).